The primary structure comprises 379 residues: Putative glutamate--cysteine ligase 2 (379 aa).

Belongs to the glutamate--cysteine ligase type 2 family. YbdK subfamily.

It carries out the reaction L-cysteine + L-glutamate + ATP = gamma-L-glutamyl-L-cysteine + ADP + phosphate + H(+). In terms of biological role, ATP-dependent carboxylate-amine ligase which exhibits weak glutamate--cysteine ligase activity. In Roseiflexus castenholzii (strain DSM 13941 / HLO8), this protein is Putative glutamate--cysteine ligase 2.